The sequence spans 459 residues: tRNA-2-methylthio-N(6)-dimethylallyladenosine synthase (459 aa).

The 116-residue stretch at 1–116 (MRAHLITYGC…IGKALETNER (116 aa)) folds into the MTTase N-terminal domain. Residues Cys10, Cys46, Cys79, Cys148, Cys152, and Cys155 each contribute to the [4Fe-4S] cluster site. Residues 134–367 (PQGKLQAHLT…IAKQKEWSAR (234 aa)) form the Radical SAM core domain. The region spanning 370 to 433 (AAKVGTIQEV…PHMLYGRLIG (64 aa)) is the TRAM domain.

Belongs to the methylthiotransferase family. MiaB subfamily. In terms of assembly, monomer. The cofactor is [4Fe-4S] cluster.

The protein localises to the cytoplasm. It carries out the reaction N(6)-dimethylallyladenosine(37) in tRNA + (sulfur carrier)-SH + AH2 + 2 S-adenosyl-L-methionine = 2-methylsulfanyl-N(6)-dimethylallyladenosine(37) in tRNA + (sulfur carrier)-H + 5'-deoxyadenosine + L-methionine + A + S-adenosyl-L-homocysteine + 2 H(+). Its function is as follows. Catalyzes the methylthiolation of N6-(dimethylallyl)adenosine (i(6)A), leading to the formation of 2-methylthio-N6-(dimethylallyl)adenosine (ms(2)i(6)A) at position 37 in tRNAs that read codons beginning with uridine. This is tRNA-2-methylthio-N(6)-dimethylallyladenosine synthase from Deinococcus geothermalis (strain DSM 11300 / CIP 105573 / AG-3a).